A 132-amino-acid chain; its full sequence is UPF0299 membrane protein YohJ (132 aa).

At 1–6 (MSKTLN) the chain is on the periplasmic side. Residues 7–27 (IIWQYLRAFVLIYACLYAGIF) traverse the membrane as a helical segment. Residues 28 to 30 (IAS) lie on the Cytoplasmic side of the membrane. The chain crosses the membrane as a helical span at residues 31–51 (LLPVTIPGSIIGMLILFVLLA). Over 52-62 (LQILPAKWVNP) the chain is Periplasmic. A helical transmembrane segment spans residues 63–83 (GCYVLIRYMALLFVPIGVGVM). Residues 84 to 92 (QYFDLLRAQ) are Cytoplasmic-facing. Residues 93–113 (FGPVVVSCAISTLVVFLVVSW) traverse the membrane as a helical segment. Residues 114-132 (SSQLVHGERKVVGQKGSEE) lie on the Periplasmic side of the membrane.

Belongs to the UPF0299 family.

Its subcellular location is the cell inner membrane. This chain is UPF0299 membrane protein YohJ (yohJ), found in Escherichia coli O157:H7.